Consider the following 261-residue polypeptide: Cytochrome c oxidase subunit 3 (261 aa).

Over Met1–Pro15 the chain is Mitochondrial matrix. The helical transmembrane segment at Trp16–Trp34 threads the bilayer. Over Phe35 to Thr40 the chain is Mitochondrial intermembrane. Residues Ala41–Thr66 form a helical membrane-spanning segment. Topologically, residues Tyr67–Thr72 are mitochondrial matrix. A helical transmembrane segment spans residues Thr73 to Ser105. Residues Leu106–Glu128 are Mitochondrial intermembrane-facing. The helical transmembrane segment at Val129–Met152 threads the bilayer. Residues Asn153–Asn155 are Mitochondrial matrix-facing. Residues Arg156–Glu183 form a helical membrane-spanning segment. Over Ala184 to Asp190 the chain is Mitochondrial intermembrane. A helical transmembrane segment spans residues Gly191–Leu223. Residues Phe224–His232 are Mitochondrial matrix-facing. The chain crosses the membrane as a helical span at residues Phe233–Ile256. At Tyr257 to Ser261 the chain is on the mitochondrial intermembrane side.

This sequence belongs to the cytochrome c oxidase subunit 3 family. Component of the cytochrome c oxidase (complex IV, CIV), a multisubunit enzyme composed of 14 subunits. The complex is composed of a catalytic core of 3 subunits MT-CO1, MT-CO2 and MT-CO3, encoded in the mitochondrial DNA, and 11 supernumerary subunits COX4I, COX5A, COX5B, COX6A, COX6B, COX6C, COX7A, COX7B, COX7C, COX8 and NDUFA4, which are encoded in the nuclear genome. The complex exists as a monomer or a dimer and forms supercomplexes (SCs) in the inner mitochondrial membrane with NADH-ubiquinone oxidoreductase (complex I, CI) and ubiquinol-cytochrome c oxidoreductase (cytochrome b-c1 complex, complex III, CIII), resulting in different assemblies (supercomplex SCI(1)III(2)IV(1) and megacomplex MCI(2)III(2)IV(2)).

It localises to the mitochondrion inner membrane. It carries out the reaction 4 Fe(II)-[cytochrome c] + O2 + 8 H(+)(in) = 4 Fe(III)-[cytochrome c] + 2 H2O + 4 H(+)(out). Component of the cytochrome c oxidase, the last enzyme in the mitochondrial electron transport chain which drives oxidative phosphorylation. The respiratory chain contains 3 multisubunit complexes succinate dehydrogenase (complex II, CII), ubiquinol-cytochrome c oxidoreductase (cytochrome b-c1 complex, complex III, CIII) and cytochrome c oxidase (complex IV, CIV), that cooperate to transfer electrons derived from NADH and succinate to molecular oxygen, creating an electrochemical gradient over the inner membrane that drives transmembrane transport and the ATP synthase. Cytochrome c oxidase is the component of the respiratory chain that catalyzes the reduction of oxygen to water. Electrons originating from reduced cytochrome c in the intermembrane space (IMS) are transferred via the dinuclear copper A center (CU(A)) of subunit 2 and heme A of subunit 1 to the active site in subunit 1, a binuclear center (BNC) formed by heme A3 and copper B (CU(B)). The BNC reduces molecular oxygen to 2 water molecules using 4 electrons from cytochrome c in the IMS and 4 protons from the mitochondrial matrix. In Papio hamadryas (Hamadryas baboon), this protein is Cytochrome c oxidase subunit 3 (MT-CO3).